Consider the following 95-residue polypeptide: Aspartyl/glutamyl-tRNA(Asn/Gln) amidotransferase subunit C (95 aa).

The protein belongs to the GatC family. In terms of assembly, heterotrimer of A, B and C subunits.

It catalyses the reaction L-glutamyl-tRNA(Gln) + L-glutamine + ATP + H2O = L-glutaminyl-tRNA(Gln) + L-glutamate + ADP + phosphate + H(+). The catalysed reaction is L-aspartyl-tRNA(Asn) + L-glutamine + ATP + H2O = L-asparaginyl-tRNA(Asn) + L-glutamate + ADP + phosphate + 2 H(+). Allows the formation of correctly charged Asn-tRNA(Asn) or Gln-tRNA(Gln) through the transamidation of misacylated Asp-tRNA(Asn) or Glu-tRNA(Gln) in organisms which lack either or both of asparaginyl-tRNA or glutaminyl-tRNA synthetases. The reaction takes place in the presence of glutamine and ATP through an activated phospho-Asp-tRNA(Asn) or phospho-Glu-tRNA(Gln). The polypeptide is Aspartyl/glutamyl-tRNA(Asn/Gln) amidotransferase subunit C (Methylocella silvestris (strain DSM 15510 / CIP 108128 / LMG 27833 / NCIMB 13906 / BL2)).